The following is a 160-amino-acid chain: Cell division protein SepF (160 aa).

Positions 18–30 are enriched in acidic residues; it reads AEGEDDFEDDVDT. Residues 18–72 form a disordered region; that stretch reads AEGEDDFEDDVDTGETSFDSDHSVTPMPSSSASASTPSAPREQSNPFQGGRVSRI. Residues 45–57 show a composition bias toward low complexity; sequence PSSSASASTPSAP.

This sequence belongs to the SepF family. As to quaternary structure, homodimer. Interacts with FtsZ.

Its subcellular location is the cytoplasm. Its function is as follows. Cell division protein that is part of the divisome complex and is recruited early to the Z-ring. Probably stimulates Z-ring formation, perhaps through the cross-linking of FtsZ protofilaments. Its function overlaps with FtsA. The chain is Cell division protein SepF from Bifidobacterium adolescentis (strain ATCC 15703 / DSM 20083 / NCTC 11814 / E194a).